A 219-amino-acid polypeptide reads, in one-letter code: Cytochrome b6 (219 aa).

Residues 32–52 (IFYCFGGIVLTCFIIQAATGF) traverse the membrane as a helical segment. C35 provides a ligand contact to heme c. Residues H86 and H100 each contribute to the heme b site. A run of 3 helical transmembrane segments spans residues 90–110 (SGLMVLVLLLHVSRVYLTAGF), 116–136 (LTWISGVILAICTVSFGVTGY), and 190–210 (AHTFILPLVTLALLLTHFLMI). Residues H191 and H206 each coordinate heme b.

Belongs to the cytochrome b family. PetB subfamily. In terms of assembly, the 4 large subunits of the cytochrome b6-f complex are cytochrome b6, subunit IV (17 kDa polypeptide, PetD), cytochrome f and the Rieske protein, while the 4 small subunits are PetG, PetL, PetM and PetN. The complex functions as a dimer. Heme b is required as a cofactor. Heme c serves as cofactor.

The protein resides in the plastid. It localises to the chloroplast thylakoid membrane. Component of the cytochrome b6-f complex, which mediates electron transfer between photosystem II (PSII) and photosystem I (PSI), cyclic electron flow around PSI, and state transitions. In Amphidinium operculatum (Dinoflagellate), this protein is Cytochrome b6.